Reading from the N-terminus, the 117-residue chain is Large ribosomal subunit protein bL20 (117 aa).

This sequence belongs to the bacterial ribosomal protein bL20 family.

Binds directly to 23S ribosomal RNA and is necessary for the in vitro assembly process of the 50S ribosomal subunit. It is not involved in the protein synthesizing functions of that subunit. The sequence is that of Large ribosomal subunit protein bL20 from Rickettsia massiliae (strain Mtu5).